A 291-amino-acid chain; its full sequence is Glycine--tRNA ligase alpha subunit (291 aa).

Belongs to the class-II aminoacyl-tRNA synthetase family. Tetramer of two alpha and two beta subunits.

The protein localises to the cytoplasm. The enzyme catalyses tRNA(Gly) + glycine + ATP = glycyl-tRNA(Gly) + AMP + diphosphate. In Coprothermobacter proteolyticus (strain ATCC 35245 / DSM 5265 / OCM 4 / BT), this protein is Glycine--tRNA ligase alpha subunit.